Reading from the N-terminus, the 129-residue chain is UPF0344 protein SAB0838 (129 aa).

4 helical membrane-spanning segments follow: residues 1–21 (MLHL…ATYL), 36–56 (LHMV…WILI), 67–87 (MLLT…EVSI), and 99–119 (MFWI…ILPL).

The protein belongs to the UPF0344 family.

It is found in the cell membrane. The sequence is that of UPF0344 protein SAB0838 from Staphylococcus aureus (strain bovine RF122 / ET3-1).